We begin with the raw amino-acid sequence, 940 residues long: Bifunctional uridylyltransferase/uridylyl-removing enzyme (940 aa).

The interval 1–379 is uridylyltransferase; it reads MPRRLRPTRL…PGARPKRKAL (379 aa). Residues 380–736 form a uridylyl-removing region; the sequence is DVEGFYEDGG…GQVRPGSNAA (357 aa). Residues 496-618 enclose the HD domain; the sequence is VDEHTLRAVG…VENPERLRLL (123 aa). ACT domains are found at residues 737 to 821 and 848 to 929; these read EVVI…PRRG and VVEA…AARP.

Belongs to the GlnD family. It depends on Mg(2+) as a cofactor.

It carries out the reaction [protein-PII]-L-tyrosine + UTP = [protein-PII]-uridylyl-L-tyrosine + diphosphate. It catalyses the reaction [protein-PII]-uridylyl-L-tyrosine + H2O = [protein-PII]-L-tyrosine + UMP + H(+). With respect to regulation, uridylyltransferase (UTase) activity is inhibited by glutamine, while glutamine activates uridylyl-removing (UR) activity. Its function is as follows. Modifies, by uridylylation and deuridylylation, the PII regulatory proteins (GlnB and homologs), in response to the nitrogen status of the cell that GlnD senses through the glutamine level. Under low glutamine levels, catalyzes the conversion of the PII proteins and UTP to PII-UMP and PPi, while under higher glutamine levels, GlnD hydrolyzes PII-UMP to PII and UMP (deuridylylation). Thus, controls uridylylation state and activity of the PII proteins, and plays an important role in the regulation of nitrogen assimilation and metabolism. This chain is Bifunctional uridylyltransferase/uridylyl-removing enzyme, found in Caulobacter vibrioides (strain ATCC 19089 / CIP 103742 / CB 15) (Caulobacter crescentus).